The primary structure comprises 311 residues: tRNA dimethylallyltransferase (311 aa).

Residue 16-23 (GATASGKS) coordinates ATP. A substrate-binding site is contributed by 18 to 23 (TASGKS). 2 interaction with substrate tRNA regions span residues 41-44 (DSRQ) and 165-169 (QRLIR).

Belongs to the IPP transferase family. In terms of assembly, monomer. Requires Mg(2+) as cofactor.

The catalysed reaction is adenosine(37) in tRNA + dimethylallyl diphosphate = N(6)-dimethylallyladenosine(37) in tRNA + diphosphate. Functionally, catalyzes the transfer of a dimethylallyl group onto the adenine at position 37 in tRNAs that read codons beginning with uridine, leading to the formation of N6-(dimethylallyl)adenosine (i(6)A). In Chlorobium chlorochromatii (strain CaD3), this protein is tRNA dimethylallyltransferase.